Consider the following 264-residue polypeptide: Glutamate racemase (264 aa).

Substrate contacts are provided by residues 10–11 (DS) and 42–43 (YG). The Proton donor/acceptor role is filled by C73. 74-75 (NT) is a substrate binding site. Catalysis depends on C183, which acts as the Proton donor/acceptor. 184-185 (TH) contributes to the substrate binding site.

Belongs to the aspartate/glutamate racemases family. As to quaternary structure, homodimer.

It carries out the reaction L-glutamate = D-glutamate. It functions in the pathway cell wall biogenesis; peptidoglycan biosynthesis. Functionally, provides the (R)-glutamate required for cell wall biosynthesis. This is Glutamate racemase from Streptococcus pyogenes serotype M1.